A 507-amino-acid chain; its full sequence is Histidine ammonia-lyase (507 aa).

Residues 141–143 constitute a cross-link (5-imidazolinone (Ala-Gly)); it reads ASG. Ser142 carries the post-translational modification 2,3-didehydroalanine (Ser).

It belongs to the PAL/histidase family. Contains an active site 4-methylidene-imidazol-5-one (MIO), which is formed autocatalytically by cyclization and dehydration of residues Ala-Ser-Gly.

It is found in the cytoplasm. The enzyme catalyses L-histidine = trans-urocanate + NH4(+). It participates in amino-acid degradation; L-histidine degradation into L-glutamate; N-formimidoyl-L-glutamate from L-histidine: step 1/3. The protein is Histidine ammonia-lyase of Paraburkholderia phytofirmans (strain DSM 17436 / LMG 22146 / PsJN) (Burkholderia phytofirmans).